A 293-amino-acid chain; its full sequence is MGPLFSSMILLASTSELLAACWRNLVLGVVQGLTEFLPISSTAHLKVVPMLVGWGDPGVSATAVIQLGSILAVIVYFKRDLAEVLKGIALAFKHGQWREPKARLGLAIAIGTMPILLAGMAIKLFWPGYEASSIRSLPSIAVVSIVMALLLALAERIGPRLKQMHLVKGRDGFVVGLAQALALIPGVSRSGSTLTASLFDGWQRQDAARFSFLLGIPAITLAGLVELKDAFAELSLEGVLPLLVGIVSAAFVSWLAIDWLLKYLQRHSTWIFVAYRLLFGVLVLAWWLSDTSN.

The next 7 helical transmembrane spans lie at 57–77 (PGVS…IVYF), 106–126 (LAIA…KLFW), 134–154 (IRSL…LALA), 172–192 (GFVV…RSGS), 212–232 (FLLG…DAFA), 239–259 (VLPL…AIDW), and 268–288 (STWI…AWWL).

It belongs to the UppP family.

It is found in the cell inner membrane. The catalysed reaction is di-trans,octa-cis-undecaprenyl diphosphate + H2O = di-trans,octa-cis-undecaprenyl phosphate + phosphate + H(+). Functionally, catalyzes the dephosphorylation of undecaprenyl diphosphate (UPP). Confers resistance to bacitracin. The sequence is that of Undecaprenyl-diphosphatase from Prochlorococcus marinus (strain MIT 9303).